The chain runs to 198 residues: COMM domain-containing protein 9 (198 aa).

N-acetylalanine is present on alanine 2. In terms of domain architecture, COMM spans 122–196 (RLVDLDWRVD…RIRDQLSAVA (75 aa)).

Belongs to the COMM domain-containing protein 9 family. In terms of assembly, component of the commander complex consisting of the CCC subcomplex and the retriever subcomplex. Component of the CCC (COMMD/CCDC22/CCDC93) subcomplex consisting of COMMD1, COMMD2, COMMD3, COMMD4, COMMD5, COMMD6, COMMD7, COMMD8, COMMD9, COMMD10, CCDC22 and CCDC93; within the complex forms a heterodimer with COMMD7. Interacts with RELB and NFKB1/p105. Interacts with CCDC22, CCDC93, SCNN1B, CUL1.

It is found in the nucleus. It localises to the cytoplasmic vesicle. Functionally, scaffold protein in the commander complex that is essential for endosomal recycling of transmembrane cargos; the commander complex is composed of the CCC subcomplex and the retriever subcomplex. May modulate activity of cullin-RING E3 ubiquitin ligase (CRL) complexes. May down-regulate activation of NF-kappa-B. Modulates Na(+) transport in epithelial cells by regulation of apical cell surface expression of amiloride-sensitive sodium channel (ENaC) subunits. This is COMM domain-containing protein 9 (Commd9) from Mus musculus (Mouse).